A 124-amino-acid polypeptide reads, in one-letter code: NADH-quinone oxidoreductase subunit K (124 aa).

3 helical membrane passes run 28–48, 52–72, and 84–104; these read MEHG…GVMV, FLFM…AFIV, and IMFI…LAIL.

It belongs to the complex I subunit 4L family. As to quaternary structure, NDH-1 is composed of 14 different subunits. Subunits NuoA, H, J, K, L, M, N constitute the membrane sector of the complex.

It is found in the cell inner membrane. The catalysed reaction is a quinone + NADH + 5 H(+)(in) = a quinol + NAD(+) + 4 H(+)(out). Its function is as follows. NDH-1 shuttles electrons from NADH, via FMN and iron-sulfur (Fe-S) centers, to quinones in the respiratory chain. The immediate electron acceptor for the enzyme in this species is believed to be ubiquinone. Couples the redox reaction to proton translocation (for every two electrons transferred, four hydrogen ions are translocated across the cytoplasmic membrane), and thus conserves the redox energy in a proton gradient. In Psychrobacter sp. (strain PRwf-1), this protein is NADH-quinone oxidoreductase subunit K.